Consider the following 147-residue polypeptide: Hemoglobin subunit beta (147 aa).

The Globin domain maps to 2 to 147 (ELTEAQRGAI…VVSALGKQYH (146 aa)). Heme b is bound by residues histidine 63 and histidine 92.

It belongs to the globin family. In terms of assembly, heterotetramer of two alpha chains and two beta chains. As to expression, red blood cells.

In terms of biological role, involved in oxygen transport from gills to the various peripheral tissues. The sequence is that of Hemoglobin subunit beta (hbb) from Electrophorus electricus (Electric eel).